The following is a 130-amino-acid chain: MAATLQFDLVSPERRLASVQATEVQIPGAAGDMTAMQGHAPTITTLRPGILRAVSAEGTKAYVVTGGFAEISATGVSVLAERAVPLDEMDAKLMDQLVADASAASSVGVDKDTAEKAMSDLQAMKAAAGF.

It belongs to the ATPase epsilon chain family. F-type ATPases have 2 components, CF(1) - the catalytic core - and CF(0) - the membrane proton channel. CF(1) has five subunits: alpha(3), beta(3), gamma(1), delta(1), epsilon(1). CF(0) has three main subunits: a, b and c.

Its subcellular location is the cell inner membrane. Its function is as follows. Produces ATP from ADP in the presence of a proton gradient across the membrane. This chain is ATP synthase epsilon chain (atpC), found in Fuscovulum blasticum (Rhodobacter blasticus).